A 383-amino-acid chain; its full sequence is Fructose-1,6-bisphosphate aldolase/phosphatase (383 aa).

Residue Asp11 is the Proton acceptor; for FBP phosphatase activity of the active site. Asp11, His18, Asp52, and Asp53 together coordinate Mg(2+). His18 provides a ligand contact to beta-D-fructose 1,6-bisphosphate. His18 contributes to the dihydroxyacetone phosphate binding site. Tyr90 contacts beta-D-fructose 1,6-bisphosphate. Mg(2+) is bound at residue Gln94. 103–104 (GN) contacts beta-D-fructose 1,6-bisphosphate. Asp131 provides a ligand contact to Mg(2+). Residue Lys132 participates in beta-D-fructose 1,6-bisphosphate binding. Dihydroxyacetone phosphate is bound at residue Lys132. Tyr228 acts as the Proton donor/acceptor; for FBP aldolase activity in catalysis. The Mg(2+) site is built by Lys231, Asp232, and Asp233. The Schiff-base intermediate with DHAP; for FBP aldolase activity role is filled by Lys231. Residues 241-242 (QH), Arg265, Asp286, and Tyr347 contribute to the beta-D-fructose 1,6-bisphosphate site. Dihydroxyacetone phosphate contacts are provided by Arg265 and Asp286. Residues 361 to 383 (FKKEEDVKKAKPSVYTSKDQGMD) form a disordered region. Positions 374-383 (VYTSKDQGMD) are enriched in polar residues.

The protein belongs to the FBP aldolase/phosphatase family. In terms of assembly, homooctamer; dimer of tetramers. Mg(2+) is required as a cofactor.

The catalysed reaction is beta-D-fructose 1,6-bisphosphate + H2O = beta-D-fructose 6-phosphate + phosphate. The enzyme catalyses beta-D-fructose 1,6-bisphosphate = D-glyceraldehyde 3-phosphate + dihydroxyacetone phosphate. The protein operates within carbohydrate biosynthesis; gluconeogenesis. Functionally, catalyzes two subsequent steps in gluconeogenesis: the aldol condensation of dihydroxyacetone phosphate (DHAP) and glyceraldehyde-3-phosphate (GA3P) to fructose-1,6-bisphosphate (FBP), and the dephosphorylation of FBP to fructose-6-phosphate (F6P). The sequence is that of Fructose-1,6-bisphosphate aldolase/phosphatase from Metallosphaera sedula (strain ATCC 51363 / DSM 5348 / JCM 9185 / NBRC 15509 / TH2).